A 265-amino-acid polypeptide reads, in one-letter code: Mlc titration factor A (265 aa).

Zn(2+)-binding residues include H111, H148, H152, and E211.

Belongs to the MtfA family. In terms of assembly, interacts with Mlc. Zn(2+) is required as a cofactor.

It localises to the cytoplasm. In terms of biological role, involved in the modulation of the activity of the glucose-phosphotransferase system (glucose-PTS). Interacts with the transcriptional repressor Mlc, preventing its interaction with DNA and leading to the modulation of expression of genes regulated by Mlc, including ptsG, which encodes the PTS system glucose-specific EIICB component. Shows zinc-dependent metallopeptidase activity. This Escherichia coli O6:K15:H31 (strain 536 / UPEC) protein is Mlc titration factor A.